A 217-amino-acid polypeptide reads, in one-letter code: Chorionic somatomammotropin hormone 1 (217 aa).

Positions 1 to 26 (MAPGSRTSLLLAFALLCLPWLQEAGA) are cleaved as a signal peptide. A Zn(2+)-binding site is contributed by His-44. Cys-79 and Cys-191 are disulfide-bonded. Glu-200 serves as a coordination point for Zn(2+). Cysteines 208 and 215 form a disulfide.

It belongs to the somatotropin/prolactin family. As to quaternary structure, can be found in a monomeric as well as dimeric form.

It localises to the secreted. Its function is as follows. Produced only during pregnancy and is involved in stimulating lactation, fetal growth and metabolism. Does not interact with GHR but only activates PRLR through zinc-induced dimerization. The sequence is that of Chorionic somatomammotropin hormone 1 (CSH1) from Homo sapiens (Human).